We begin with the raw amino-acid sequence, 432 residues long: Heme-based aerotactic transducer HemAT (432 aa).

Residues 184–420 (YNQTRDEQEE…EVSRAVSHVA (237 aa)) form the Methyl-accepting transducer domain.

This sequence belongs to the methyl-accepting chemotaxis (MCP) protein family. Homotetramer.

Heme-containing signal transducer responsible for aerotaxis, the migratory response toward or away from oxygen. In Bacillus subtilis (strain 168), this protein is Heme-based aerotactic transducer HemAT (hemAT).